The chain runs to 302 residues: Sulfate adenylyltransferase subunit 2 (302 aa).

This sequence belongs to the PAPS reductase family. CysD subfamily. In terms of assembly, heterodimer composed of CysD, the smaller subunit, and CysN.

It carries out the reaction sulfate + ATP + H(+) = adenosine 5'-phosphosulfate + diphosphate. It functions in the pathway sulfur metabolism; hydrogen sulfide biosynthesis; sulfite from sulfate: step 1/3. Its function is as follows. With CysN forms the ATP sulfurylase (ATPS) that catalyzes the adenylation of sulfate producing adenosine 5'-phosphosulfate (APS) and diphosphate, the first enzymatic step in sulfur assimilation pathway. APS synthesis involves the formation of a high-energy phosphoric-sulfuric acid anhydride bond driven by GTP hydrolysis by CysN coupled to ATP hydrolysis by CysD. The protein is Sulfate adenylyltransferase subunit 2 of Klebsiella pneumoniae (strain 342).